Here is a 444-residue protein sequence, read N- to C-terminus: Sprouty-related, EVH1 domain-containing protein 1 (444 aa).

S2 is modified (N-acetylserine). The WH1 domain occupies 6–123 (ATSDNDNSYA…RGIRRAIEDI (118 aa)). K225 carries the N6-methyllysine modification. Positions 234-286 (SIRHVSFQDEDEIVRINPRDILIRRYADYRHPDMWKNDLERDDTDSSVPFSKQ) constitute a KBD domain. S239 carries the phosphoserine modification. Residues 268–287 (WKNDLERDDTDSSVPFSKQD) are disordered. S309 carries the post-translational modification Phosphoserine. The tract at residues 333–444 (SRCVYCQERF…CCGGKHKAAG (112 aa)) is required for interaction with TESK1. In terms of domain architecture, SPR spans 334 to 442 (RCVYCQERFN…CGCCGGKHKA (109 aa)).

In terms of assembly, homodimer and heterodimer. Able to interact with SPRED2 to form heterodimers. Interacts (via C-terminus) with TAOK1/MARKK (via C-terminus); the interaction does not affect TAOK1 kinase activity. Interacts (via C-terminus) with TESK1 (via C-terminus); the interaction inhibits TESK1 kinase activity. Interacts with CAV1. Interacts with RAS. Interacts with palmitoyltransferase ZDHHC17/HIP14; the interaction leads to palmitoylation of SPRED1. Post-translationally, palmitoylated by ZDHHC17/HIP14. In terms of processing, ubiquitinated. Phosphorylated on tyrosine. Expressed in brain. Weakly expressed in lung, heart, liver, kidney, intestine, spleen, testis, thymus, colon and ovary. Also expressed in embryonic tissues such as heart, lung, liver and brain. Highly expressed in IL3-dependent hematopoietic cell lines (Ba/F3 and MC/9) and bone marrow-derived mast cells (BMMC).

It localises to the cell membrane. It is found in the membrane. The protein resides in the caveola. Its subcellular location is the nucleus. Functionally, tyrosine kinase substrate that inhibits growth-factor-mediated activation of MAP kinase. Negatively regulates hematopoiesis of bone marrow. Inhibits fibroblast growth factor (FGF)-induced retinal lens fiber differentiation, probably by inhibiting FGF-mediated phosphorylation of ERK1/2. Attenuates actin stress fiber formation via inhibition of TESK1-mediated phosphorylation of cofilin. Inhibits TGFB-induced epithelial-to-mesenchymal transition in lens epithelial cells. The chain is Sprouty-related, EVH1 domain-containing protein 1 (Spred1) from Mus musculus (Mouse).